The primary structure comprises 184 residues: NADH-quinone oxidoreductase subunit B (184 aa).

[4Fe-4S] cluster contacts are provided by C37, C38, C103, and C132.

The protein belongs to the complex I 20 kDa subunit family. As to quaternary structure, NDH-1 is composed of 14 different subunits. Subunits NuoB, C, D, E, F, and G constitute the peripheral sector of the complex. The cofactor is [4Fe-4S] cluster.

The protein resides in the cell membrane. It carries out the reaction a quinone + NADH + 5 H(+)(in) = a quinol + NAD(+) + 4 H(+)(out). Functionally, NDH-1 shuttles electrons from NADH, via FMN and iron-sulfur (Fe-S) centers, to quinones in the respiratory chain. The immediate electron acceptor for the enzyme in this species is believed to be a menaquinone. Couples the redox reaction to proton translocation (for every two electrons transferred, four hydrogen ions are translocated across the cytoplasmic membrane), and thus conserves the redox energy in a proton gradient. The chain is NADH-quinone oxidoreductase subunit B from Mycobacterium marinum (strain ATCC BAA-535 / M).